The chain runs to 71 residues: Large ribosomal subunit protein uL29 (71 aa).

The disordered stretch occupies residues 1–20 (MKARELQELRQGSSPQDLQE).

The protein belongs to the universal ribosomal protein uL29 family.

The protein is Large ribosomal subunit protein uL29 of Clostridium kluyveri (strain ATCC 8527 / DSM 555 / NBRC 12016 / NCIMB 10680 / K1).